We begin with the raw amino-acid sequence, 104 residues long: UPF0213 protein in VLF1-GP41 intergenic region (104 aa).

Residues 9 to 89 enclose the GIY-YIG domain; it reads KVWCVYILRQ…SKYFKLRLIK (81 aa).

It belongs to the UPF0213 family.

This Autographa californica nuclear polyhedrosis virus (AcMNPV) protein is UPF0213 protein in VLF1-GP41 intergenic region.